Reading from the N-terminus, the 562-residue chain is Solute carrier family 22 member 6 (562 aa).

Topologically, residues 1–15 (MPFSELLEQVGSTGR) are cytoplasmic. The chain crosses the membrane as a helical span at residues 16 to 36 (FQVLHVTLLCIPVLMMASHNL). The Extracellular portion of the chain corresponds to 37–147 (LQNFVATVPS…LVCDMHSFKQ (111 aa)). Residues 148 to 168 (MGQTIYMGGVLVGALLFGGLS) traverse the membrane as a helical segment. Over 169 to 174 (DRYGRR) the chain is Cytoplasmic. A helical membrane pass occupies residues 175–195 (ILLLISNLLMAVSGTCAAFSS). Topologically, residues 196–205 (SFSLFCVFRF) are extracellular. Residues 206-226 (GCGLALSGLGLNTFSLIVEWI) traverse the membrane as a helical segment. Residues 227-235 (PTRIRTAVG) are Cytoplasmic-facing. Residues 236-256 (TTTGYCYTLGQLILVLLAYFI) form a helical membrane-spanning segment. The Extracellular portion of the chain corresponds to 257-260 (RDWR). A helical transmembrane segment spans residues 261–281 (WLTLAVSLPFYVFFLIAWWFH). Residues 282 to 351 (ESSRWLALSN…FNTPAMRKRT (70 aa)) are Cytoplasmic-facing. Residues 352-372 (LCLSAVWLSTSFAYYGLAMDL) traverse the membrane as a helical segment. Residues 373-378 (DKFGVD) are Extracellular-facing. The helical transmembrane segment at 379–399 (IYLIQVIFGAVDIPAKVVVVV) threads the bilayer. Over 400–408 (SMSLIGRRR) the chain is Cytoplasmic. Residues 409 to 429 (SQCAVLVVAGITILLNLLVPY) traverse the membrane as a helical segment. Over 430–444 (DKQTIRTCLAVLGKG) the chain is Extracellular. The helical transmembrane segment at 445 to 465 (CLAASFNCCYLYSGELFPTII) threads the bilayer. Residues 466-468 (RQN) lie on the Cytoplasmic side of the membrane. The chain crosses the membrane as a helical span at residues 469 to 489 (GMGWVSMMARIGAMVAPMVLL). At 490-495 (TRDYIP) the chain is on the extracellular side. Residues 496 to 516 (WLPGLIYGGAPILSGLAAIFL) form a helical membrane-spanning segment. Residues 517-562 (PETLGYPLPDTIQDVEESGSGRKSKMSTKETITLQDKQANLLKQSA) are Cytoplasmic-facing.

It belongs to the major facilitator (TC 2.A.1) superfamily. Organic cation transporter (TC 2.A.1.19) family. Glycosylated. Glycosylation is necessary for proper targeting of the transporter to the plasma membrane.

It is found in the cell membrane. Its subcellular location is the basolateral cell membrane. It localises to the basal cell membrane. Involved in the renal elimination of endogenous and exogenous organic anions. Functions as organic anion exchanger when the uptake of one molecule of organic anion is coupled with an efflux of one molecule of endogenous dicarboxylic acid (glutarate, ketoglutarate, etc). Mediates the sodium-independent uptake of p-aminohippurate (PAH), 2,3-dimercapto-1-propanesulfonic acid (DMPS), cidofovir, adefovir, 9-(2-phosphonylmethoxyethyl) guanine (PMEG), 9-(2-phosphonylmethoxyethyl) diaminopurine (PMEDAP), ochratoxin (OTA), acyclovir (ACV), 3'-azido-3-'deoxythymidine (AZT), cimetidine (CMD), 2,4-dichloro-phenoxyacetate (2,4-D), hippurate (HA), indoleacetate (IA), indoxyl sulfate (IS), 3-carboxy-4-methyl-5-propyl-2-furanpropionate (CMPF) and edaravone sulfate. Mediates the sodium-independent uptake of p-aminohippurate (PAH). PAH uptake is inhibited by p-chloromercuribenzenesulphonate (PCMBS), diethyl pyrocarbonate (DEPC), indomethacin, sulindac, diclofenac, carprofen, okadaic acid, benzothiazolylcysteine (BTC), S-chlorotrifluoroethylcysteine (CTFC), cysteine S-conjugates S-dichlorovinylcysteine (DCVC), furosemide, steviol, phorbol 12-myristate 13-acetate (PMA), calcium ionophore A23187, benzylpenicillin, bumetamide, losartan, probenecid, phenol red, urate, glutarate and alpha-ketoglutarate. PAH uptake is inhibited by glutarate. The protein is Solute carrier family 22 member 6 (SLC22A6) of Pseudopleuronectes americanus (Winter flounder).